A 45-amino-acid polypeptide reads, in one-letter code: Large ribosomal subunit protein bL34c (45 aa).

This sequence belongs to the bacterial ribosomal protein bL34 family.

The protein localises to the plastid. The protein resides in the chloroplast. This Emiliania huxleyi (Coccolithophore) protein is Large ribosomal subunit protein bL34c.